The following is an 81-amino-acid chain: UPF0298 protein SAK_1599 (81 aa).

The protein belongs to the UPF0298 family.

Its subcellular location is the cytoplasm. The polypeptide is UPF0298 protein SAK_1599 (Streptococcus agalactiae serotype Ia (strain ATCC 27591 / A909 / CDC SS700)).